Reading from the N-terminus, the 355-residue chain is Hyaluronan and proteoglycan link protein 1 (355 aa).

Positions 1–9 are excised as a propeptide; the sequence is MTSLLFLVL. Residues N21 and N56 are each glycosylated (N-linked (GlcNAc...) asparagine). The 119-residue stretch at 38-156 folds into the Ig-like V-type domain; it reads PRLLVVAEQA…EDDTAVVALN (119 aa). Disulfide bonds link C61–C140, C182–C253, C206–C227, C280–C350, and C305–C326. 2 Link domains span residues 160 to 255 and 260 to 352; these read VVFP…FCFT and GRFY…YCFR.

Belongs to the HAPLN family.

It is found in the secreted. The protein localises to the extracellular space. It localises to the extracellular matrix. Stabilizes the aggregates of proteoglycan monomers with hyaluronic acid in the extracellular cartilage matrix. The chain is Hyaluronan and proteoglycan link protein 1 (HAPLN1) from Gallus gallus (Chicken).